Here is a 436-residue protein sequence, read N- to C-terminus: Phaseolin, alpha-type (436 aa).

The first 24 residues, 1–24 (MMRARVPLLLLGILFLASLSASFA), serve as a signal peptide directing secretion. A disordered region spans residues 233–257 (LSKHAKSSSRKSHSKQDNTIGNEFG). Positions 236–245 (HAKSSSRKSH) are enriched in basic residues. Residues 245-396 (HSKQDNTIGN…TFSGSGEEVM (152 aa)) enclose the Cupin type-1 domain. N-linked (GlcNAc...) (complex) asparagine; alternate glycosylation is present at Asn-258. Asn-258 carries an N-linked (GlcNAc...) (high mannose) asparagine; alternate glycan. An N-linked (GlcNAc...) (high mannose) asparagine glycan is attached at Asn-347. The segment at 411-436 (HHHQQEQQKGSHQQEQQKGRKGAFVY) is disordered. Residues 417-426 (QQKGSHQQEQ) are compositionally biased toward low complexity.

This sequence belongs to the 7S seed storage protein family. As to quaternary structure, homotrimer. Post-translationally, N-glycosylated; glycans consist in Man9(GlcNAc)2 and Man7(GlcNAc)2 when dually glycosylated at Asn-258 and Asn-347, whereas it consists in Xyl-Man3(GlcNAc)2 when solely glycosylated at Asn-258.

It is found in the vacuole. The protein localises to the aleurone grain. Its function is as follows. Major seed storage protein. The sequence is that of Phaseolin, alpha-type from Phaseolus vulgaris (Kidney bean).